The primary structure comprises 496 residues: Geranylhydroquinone 3''-hydroxylase CYP76B74 (496 aa).

A helical membrane pass occupies residues Y3–K23. Residue C436 participates in heme binding.

It belongs to the cytochrome P450 family. Heme serves as cofactor.

It is found in the endoplasmic reticulum membrane. It catalyses the reaction (2E)-geranylhydroquinone + reduced [NADPH--hemoprotein reductase] + O2 = (2Z)-3''-hydroxygeranylhydroquinone + oxidized [NADPH--hemoprotein reductase] + H2O + H(+). Its function is as follows. Hydroxylase involved in the biosynthesis pathway of the red naphthoquinone pigment shikonin. Catalyzes the key step C-3''-hydroxylation of the prenylated phenolic intermediate geranylhydroquinone to form 3''-hydroxygeranylhydroquinone. This Arnebia euchroma (Pink arnebia) protein is Geranylhydroquinone 3''-hydroxylase CYP76B74.